Consider the following 131-residue polypeptide: Small ribosomal subunit protein uS8 (131 aa).

The protein belongs to the universal ribosomal protein uS8 family. Part of the 30S ribosomal subunit. Contacts proteins S5 and S12.

One of the primary rRNA binding proteins, it binds directly to 16S rRNA central domain where it helps coordinate assembly of the platform of the 30S subunit. The protein is Small ribosomal subunit protein uS8 of Campylobacter jejuni (strain RM1221).